Consider the following 220-residue polypeptide: Elongation factor Ts (220 aa).

Residues 83–86 (TDFV) are involved in Mg(2+) ion dislocation from EF-Tu.

The protein belongs to the EF-Ts family.

It localises to the cytoplasm. Functionally, associates with the EF-Tu.GDP complex and induces the exchange of GDP to GTP. It remains bound to the aminoacyl-tRNA.EF-Tu.GTP complex up to the GTP hydrolysis stage on the ribosome. This chain is Elongation factor Ts, found in Synechococcus sp. (strain CC9605).